Here is a 179-residue protein sequence, read N- to C-terminus: Interleukin-10 (179 aa).

A signal peptide spans 1 to 19; the sequence is MPSSSALLCCLVFLAGVAA. 2 disulfides stabilise this stretch: C31/C127 and C81/C133. N135 carries N-linked (GlcNAc...) asparagine glycosylation.

The protein belongs to the IL-10 family. In terms of assembly, homodimer. Interacts with IL10RA and IL10RB.

It localises to the secreted. Functionally, major immune regulatory cytokine that acts on many cells of the immune system where it has profound anti-inflammatory functions, limiting excessive tissue disruption caused by inflammation. Mechanistically, IL10 binds to its heterotetrameric receptor comprising IL10RA and IL10RB leading to JAK1 and STAT2-mediated phosphorylation of STAT3. In turn, STAT3 translocates to the nucleus where it drives expression of anti-inflammatory mediators. Targets antigen-presenting cells (APCs) such as macrophages and monocytes and inhibits their release of pro-inflammatory cytokines including granulocyte-macrophage colony-stimulating factor /GM-CSF, granulocyte colony-stimulating factor/G-CSF, IL-1 alpha, IL-1 beta, IL-6, IL-8 and TNF-alpha. Also interferes with antigen presentation by reducing the expression of MHC-class II and co-stimulatory molecules, thereby inhibiting their ability to induce T cell activation. In addition, controls the inflammatory response of macrophages by reprogramming essential metabolic pathways including mTOR signaling. In Cervus elaphus (Red deer), this protein is Interleukin-10 (IL10).